A 58-amino-acid polypeptide reads, in one-letter code: uncharacterized protein (58 aa).

This sequence to A.fulgidus AF2407.1.

This is an uncharacterized protein from Pyrococcus abyssi (strain GE5 / Orsay).